A 152-amino-acid polypeptide reads, in one-letter code: MEKLEVGQLAPDFRLKNSDGVEISLKDLLHKKVVLYFYPKDNTPGCTLEAKDFSALFSEFEKKNAVVVGVSPDNSQSHQKFISQCSLNVILLCDEDKKVANLYKAYGKRMLYGKEHLGIIRSTFIINTQGVLEKCFYNVKAKGHAQKVLESL.

The Thioredoxin domain maps to 4–152; the sequence is LEVGQLAPDF…GHAQKVLESL (149 aa). C46 acts as the Cysteine sulfenic acid (-SOH) intermediate in catalysis. A disulfide bond links C46 and C85.

Belongs to the peroxiredoxin family. BCP/PrxQ subfamily. Monomer.

It catalyses the reaction a hydroperoxide + [thioredoxin]-dithiol = an alcohol + [thioredoxin]-disulfide + H2O. In terms of biological role, thiol-specific peroxidase that catalyzes the reduction of hydrogen peroxide and organic hydroperoxides to water and alcohols, respectively. Plays a role in cell protection against oxidative stress by detoxifying peroxides and as sensor of hydrogen peroxide-mediated signaling events. In Helicobacter pylori (strain J99 / ATCC 700824) (Campylobacter pylori J99), this protein is Putative peroxiredoxin bcp (bcp).